The sequence spans 399 residues: Methylthioribose kinase (399 aa).

ATP contacts are provided by residues Asn40, Lys57, and 111–113 (EDL). Residue Asp229 participates in substrate binding. 246 to 248 (DAE) contacts ATP. Arg344 contacts substrate.

This sequence belongs to the methylthioribose kinase family. In terms of assembly, homodimer.

The catalysed reaction is 5-(methylsulfanyl)-D-ribose + ATP = 5-(methylsulfanyl)-alpha-D-ribose 1-phosphate + ADP + H(+). It participates in amino-acid biosynthesis; L-methionine biosynthesis via salvage pathway; S-methyl-5-thio-alpha-D-ribose 1-phosphate from S-methyl-5'-thioadenosine (hydrolase route): step 2/2. Catalyzes the phosphorylation of methylthioribose into methylthioribose-1-phosphate. The polypeptide is Methylthioribose kinase (Citrobacter koseri (strain ATCC BAA-895 / CDC 4225-83 / SGSC4696)).